Here is a 427-residue protein sequence, read N- to C-terminus: Adenylosuccinate synthetase (427 aa).

GTP contacts are provided by residues 12-18 (GDEGKGK) and 40-42 (GHT). The active-site Proton acceptor is Asp13. Asp13 and Gly40 together coordinate Mg(2+). Residues 13–16 (DEGK), 38–41 (NAGH), Thr128, Arg142, Gln223, Thr238, and Arg302 contribute to the IMP site. Residue His41 is the Proton donor of the active site. Position 298 to 304 (298 to 304 (TTTGRNR)) interacts with substrate. GTP contacts are provided by residues Arg304, 330–332 (KLD), and 412–414 (GVG).

Belongs to the adenylosuccinate synthetase family. As to quaternary structure, homodimer. Requires Mg(2+) as cofactor.

It localises to the cytoplasm. It carries out the reaction IMP + L-aspartate + GTP = N(6)-(1,2-dicarboxyethyl)-AMP + GDP + phosphate + 2 H(+). The protein operates within purine metabolism; AMP biosynthesis via de novo pathway; AMP from IMP: step 1/2. Functionally, plays an important role in the de novo pathway of purine nucleotide biosynthesis. Catalyzes the first committed step in the biosynthesis of AMP from IMP. The protein is Adenylosuccinate synthetase of Thermobifida fusca (strain YX).